A 64-amino-acid polypeptide reads, in one-letter code: Large ribosomal subunit protein bL35 (64 aa).

Composition is skewed to basic residues over residues 1–26 (MPKM…KRSK) and 33–44 (LTKKSPKRKRKL). The tract at residues 1-44 (MPKMKTHRGAAKRFKKTGTGKIKRSKAYTSHILTKKSPKRKRKL) is disordered.

This sequence belongs to the bacterial ribosomal protein bL35 family.

This is Large ribosomal subunit protein bL35 from Alkaliphilus oremlandii (strain OhILAs) (Clostridium oremlandii (strain OhILAs)).